Consider the following 589-residue polypeptide: Pentalenolactone D synthase (589 aa).

FAD-binding positions include 60–61 (IG), 82–83 (DE), 90–91 (TW), 102–103 (DV), tyrosine 108, valine 152, and methionine 491.

The protein belongs to the FAD-binding monooxygenase family. FAD serves as cofactor.

It catalyses the reaction 1-deoxy-11-oxopentalenate + NADPH + O2 + H(+) = pentalenolactone D + NADP(+) + H2O. The protein operates within antibiotic biosynthesis; pentalenolactone biosynthesis. In terms of biological role, catalyzes the flavin-dependent Baeyer-Villiger oxidation of 1-deoxy-11-oxopentalenic acid to pentalenolactone D in the biosynthesis of pentalenolactone antibiotic. The protein is Pentalenolactone D synthase (pntE) of Streptomyces arenae.